Consider the following 754-residue polypeptide: MELEEEENPRKRKETPNSALTTELDRPSWDVQDPEPQAKKARLSTILFTDNCEVTHRQLCELLKYAILGKSTLPKPSWCQLLHQKQLNNVVVFILKGMSQLHFYRFYLEFRFLRKTFRHKFSLPPPTSSFLFDIIGLQKKKSARGCPRTVEGPLISATLKSSIDLQNDPIIQKYGYKNVSLTRCLLTKEEMKTFHFPLQGSPNCENFILLKYSGFITDSSPLFGLDCEVCLTSMGKELTRISLVAEGGYCLMDELVKPDFKILDYLTSFSGITKEILNPVTTKLKDVQKLLRELLPPDAVLVGHCLDLDLRVLKIIHPYVIDTSLLYIGKQGRRFKLTFLAKVILGKDIQCPNKLGHDGIEDARTALELVQYFLKYGPKKIAEFNLEALAANQEQGNKEGATHMRSVLECLDSMGQKLLFLTQDIDELSSYRNCQTVKCSSNKEVLEQARVEVPLFPFNIVQFSFRPFPPLFAEEMKNNMKTRWTEMSTIYAGPFSKDCNVGSLKKVFSSLGPVQSITLVLETYRPYFSIQYELLEAAQLAIETMNGTILEGSCIRVHRLLTELTLECDTLVRELEQDSENQGTIYVAGIGETFKEHLLEQSNLFPDLEAVILPKELKSRKQKNYCFLKFKTFNSAQVALEVLKGKDWKLKGRNALTSRHLQAWLKNIHPEPSMPMGLRIVPPLLERHIFRTLKANHPKIVAWRWSRRIEKLYHSLSPGTFCLILLPGTKNTFGSHPGLGLMKIKEEEGGDTLL.

The disordered stretch occupies residues 1 to 36 (MELEEEENPRKRKETPNSALTTELDRPSWDVQDPEP). The Exonuclease domain maps to 222–370 (LFGLDCEVCL…EDARTALELV (149 aa)). 2 consecutive RRM domains span residues 488 to 562 (STIY…RLLT) and 583 to 662 (GTIY…RHLQ).

The sequence is that of RNA exonuclease 5 (Rexo5) from Rattus norvegicus (Rat).